Consider the following 446-residue polypeptide: Probable beta-1,4-xylosyltransferase IRX9L (446 aa).

The segment at 1–26 is disordered; that stretch reads MSRRNAGAMQREGSVKDWEEFDPSPS. Topologically, residues 1–85 are cytoplasmic; sequence MSRRNAGAMQ…SRSKGMSLKR (85 aa). Residues 86–106 traverse the membrane as a helical; Signal-anchor for type II membrane protein segment; that stretch reads AMLQLLVCFMVGIFIGFTPPF. The Lumenal portion of the chain corresponds to 107-446; the sequence is SVDLPGKIAS…RNLDAVVPIT (340 aa). N185, N258, N361, and N411 each carry an N-linked (GlcNAc...) asparagine glycan.

Belongs to the glycosyltransferase 43 family.

It localises to the golgi apparatus membrane. Probable beta-1,4-xylosyltransferase involved in xylan biosynthesis in cell walls. The protein is Probable beta-1,4-xylosyltransferase IRX9L of Oryza sativa subsp. japonica (Rice).